The following is a 109-amino-acid chain: Nucleoid-associated protein Ping_2276 (109 aa).

The protein belongs to the YbaB/EbfC family. In terms of assembly, homodimer.

Its subcellular location is the cytoplasm. It localises to the nucleoid. Binds to DNA and alters its conformation. May be involved in regulation of gene expression, nucleoid organization and DNA protection. The protein is Nucleoid-associated protein Ping_2276 of Psychromonas ingrahamii (strain DSM 17664 / CCUG 51855 / 37).